Consider the following 219-residue polypeptide: Kappa-scoloptoxin(11)-Ss1a (219 aa).

An N-terminal signal peptide occupies residues 1 to 16; sequence MFYSHLLFFTFTFACS. Positions 17–25 are excised as a propeptide; sequence SSLNRKTKR.

Post-translationally, contains 8 disulfide bonds. Expressed by the venom gland.

The protein localises to the secreted. Its function is as follows. Voltage-gated potassium channel inhibitor. The protein is Kappa-scoloptoxin(11)-Ss1a of Scolopendra dehaani (Thai centipede).